The sequence spans 31 residues: Cyclotide psybry A (31 aa).

The segment at residues 1 to 31 is a cross-link (cyclopeptide (Gly-Asn)); it reads GFNPCGETCIWFPTCHAPGCTCSIANICVRN. Disulfide bonds link C5–C20, C9–C22, and C15–C28.

This is a cyclic peptide.

Its function is as follows. Probably participates in a plant defense mechanism. This Psychotria brachyceras protein is Cyclotide psybry A.